The sequence spans 620 residues: KIF-binding protein (620 aa).

Coiled coils occupy residues 30–64 (YKSKYEAIELLVKELKKEINENEKELNQQQQQDIL) and 133–169 (LIKSENLINQTIEKQQEQEQEQEQQFKDKLESLQLQN).

This sequence belongs to the KIF-binding protein family.

It is found in the cytoplasm. The protein localises to the cytoskeleton. In terms of biological role, activator of KIF1B plus-end-directed microtubule motor activity. Required for organization of axonal microtubules, and axonal outgrowth and maintenance during peripheral and central nervous system development. This Dictyostelium discoideum (Social amoeba) protein is KIF-binding protein (kifbp).